A 114-amino-acid polypeptide reads, in one-letter code: Large ribosomal subunit protein bL20 (114 aa).

This sequence belongs to the bacterial ribosomal protein bL20 family.

In terms of biological role, binds directly to 23S ribosomal RNA and is necessary for the in vitro assembly process of the 50S ribosomal subunit. It is not involved in the protein synthesizing functions of that subunit. This is Large ribosomal subunit protein bL20 from Parabacteroides distasonis (strain ATCC 8503 / DSM 20701 / CIP 104284 / JCM 5825 / NCTC 11152).